Reading from the N-terminus, the 149-residue chain is Sex-regulated protein janus-A (149 aa).

A substrate-binding site is contributed by lysine 46. Histidine 77 acts as the Proton acceptor in catalysis. A substrate-binding site is contributed by 118 to 120 (STG).

It belongs to the janus family.

Functionally, janA and janB regulate somatic sex differentiation. This chain is Sex-regulated protein janus-A (janA), found in Drosophila pseudoobscura pseudoobscura (Fruit fly).